Consider the following 303-residue polypeptide: Acetylglutamate kinase (303 aa).

Substrate-binding positions include 73-74 (GG), Arg-95, and Asn-194.

It belongs to the acetylglutamate kinase family. ArgB subfamily.

The protein localises to the cytoplasm. It catalyses the reaction N-acetyl-L-glutamate + ATP = N-acetyl-L-glutamyl 5-phosphate + ADP. It functions in the pathway amino-acid biosynthesis; L-arginine biosynthesis; N(2)-acetyl-L-ornithine from L-glutamate: step 2/4. Catalyzes the ATP-dependent phosphorylation of N-acetyl-L-glutamate. This Saccharopolyspora erythraea (strain ATCC 11635 / DSM 40517 / JCM 4748 / NBRC 13426 / NCIMB 8594 / NRRL 2338) protein is Acetylglutamate kinase.